A 279-amino-acid chain; its full sequence is Expansin-A22 (279 aa).

The signal sequence occupies residues 1–27 (MKLLEKMIYVEFLMIIMVIWVVPMSYG). An Expansin-like EG45 domain is found at 76–186 (QGACGYGNLF…RRIPCSKTGG (111 aa)). The Expansin-like CBD domain maps to 196–275 (YFLMVLIYNV…NWGFGQTFDG (80 aa)).

Belongs to the expansin family. Expansin A subfamily.

It is found in the secreted. Its subcellular location is the cell wall. It localises to the membrane. Its function is as follows. Causes loosening and extension of plant cell walls by disrupting non-covalent bonding between cellulose microfibrils and matrix glucans. No enzymatic activity has been found. The sequence is that of Expansin-A22 (EXPA22) from Arabidopsis thaliana (Mouse-ear cress).